A 672-amino-acid polypeptide reads, in one-letter code: Cytadherence high molecular weight protein 3 (672 aa).

25 consecutive repeat copies span residues 98–100 (YDQ), 106–108 (YDQ), 160–162 (PVV), 197–199 (YDQ), 206–208 (YDQ), 211–213 (YDQ), 221–223 (YDQ), 226–228 (YDQ), 235–237 (YDQ), 249–251 (YDQ), 288–290 (PVV), 310–319 (VEPTPTPVVE), 312–315 (PTPT), 316–318 (PVV), 322–324 (PVV), 330–339 (VEPTPTPVVE), 332–335 (PTPT), 336–338 (PVV), 354–358 (PQPTP), 385–389 (PTPVP), 396–400 (PQPTP), 402–404 (PVV), 413–415 (PVV), 424–428 (PTPAP), and 454–456 (PVV). A 9 X 3 AA repeats OF Y-D-Q region spans residues 98–251 (YDQVNNTFYD…NAYNTQNYDQ (154 aa)). The tract at residues 160–456 (PVVDPDATPE…QTTPAVPPVV (297 aa)) is 8 X 3 AA repeats of P-V-V. The disordered stretch occupies residues 177 to 197 (GLDPLPQAPDEYQDTTAPPAY). A 2 X 10 AA repeats of V-E-P-T-P-T-P-V-V-E region spans residues 310–339 (VEPTPTPVVETAPVVEAPKVVEPTPTPVVE). Residues 312-428 (PTPTPVVETA…PKVVTPTPAP (117 aa)) form a 6 X 5 AA repeats of P-X-P-X-P region.

The protein localises to the cell projection. Its subcellular location is the attachment organelle membrane. In terms of biological role, component of the cytoskeleton-like structure which stabilizes the shape of the wall-less mycoplasma. This cytoskeleton-like network of accessory proteins containing HMW proteins 1 to 5 allows the proper anchoring of cytadhesin proteins in the mycoplasmal membrane at the attachment organelle. Essential for successful surface parasitism. This chain is Cytadherence high molecular weight protein 3 (hmw3), found in Mycoplasma pneumoniae (strain ATCC 29342 / M129 / Subtype 1) (Mycoplasmoides pneumoniae).